A 441-amino-acid polypeptide reads, in one-letter code: UDP-N-acetylglucosamine--N-acetylmuramyl-(pentapeptide) pyrophosphoryl-undecaprenol N-acetylglucosamine transferase (441 aa).

Residues 28–30, asparagine 140, arginine 176, serine 204, isoleucine 257, and glutamine 302 contribute to the UDP-N-acetyl-alpha-D-glucosamine site; that span reads TGG.

This sequence belongs to the glycosyltransferase 28 family. MurG subfamily.

Its subcellular location is the cell inner membrane. It carries out the reaction di-trans,octa-cis-undecaprenyl diphospho-N-acetyl-alpha-D-muramoyl-L-alanyl-D-glutamyl-meso-2,6-diaminopimeloyl-D-alanyl-D-alanine + UDP-N-acetyl-alpha-D-glucosamine = di-trans,octa-cis-undecaprenyl diphospho-[N-acetyl-alpha-D-glucosaminyl-(1-&gt;4)]-N-acetyl-alpha-D-muramoyl-L-alanyl-D-glutamyl-meso-2,6-diaminopimeloyl-D-alanyl-D-alanine + UDP + H(+). It functions in the pathway cell wall biogenesis; peptidoglycan biosynthesis. In terms of biological role, cell wall formation. Catalyzes the transfer of a GlcNAc subunit on undecaprenyl-pyrophosphoryl-MurNAc-pentapeptide (lipid intermediate I) to form undecaprenyl-pyrophosphoryl-MurNAc-(pentapeptide)GlcNAc (lipid intermediate II). The chain is UDP-N-acetylglucosamine--N-acetylmuramyl-(pentapeptide) pyrophosphoryl-undecaprenol N-acetylglucosamine transferase from Xanthomonas oryzae pv. oryzae (strain MAFF 311018).